The chain runs to 364 residues: tRNA 2-selenouridine synthase (364 aa).

One can recognise a Rhodanese domain in the interval 14-137 (LIADTPIIDV…LRQTAIQATI (124 aa)). The S-selanylcysteine intermediate role is filled by cysteine 97.

The protein belongs to the SelU family. As to quaternary structure, monomer.

The catalysed reaction is 5-methylaminomethyl-2-thiouridine(34) in tRNA + selenophosphate + (2E)-geranyl diphosphate + H2O + H(+) = 5-methylaminomethyl-2-selenouridine(34) in tRNA + (2E)-thiogeraniol + phosphate + diphosphate. The enzyme catalyses 5-methylaminomethyl-2-thiouridine(34) in tRNA + (2E)-geranyl diphosphate = 5-methylaminomethyl-S-(2E)-geranyl-thiouridine(34) in tRNA + diphosphate. It catalyses the reaction 5-methylaminomethyl-S-(2E)-geranyl-thiouridine(34) in tRNA + selenophosphate + H(+) = 5-methylaminomethyl-2-(Se-phospho)selenouridine(34) in tRNA + (2E)-thiogeraniol. It carries out the reaction 5-methylaminomethyl-2-(Se-phospho)selenouridine(34) in tRNA + H2O = 5-methylaminomethyl-2-selenouridine(34) in tRNA + phosphate. In terms of biological role, involved in the post-transcriptional modification of the uridine at the wobble position (U34) of tRNA(Lys), tRNA(Glu) and tRNA(Gln). Catalyzes the conversion of 2-thiouridine (S2U-RNA) to 2-selenouridine (Se2U-RNA). Acts in a two-step process involving geranylation of 2-thiouridine (S2U) to S-geranyl-2-thiouridine (geS2U) and subsequent selenation of the latter derivative to 2-selenouridine (Se2U) in the tRNA chain. This is tRNA 2-selenouridine synthase from Shigella boydii serotype 18 (strain CDC 3083-94 / BS512).